A 169-amino-acid chain; its full sequence is Ribosome maturation factor RimM (169 aa).

The 74-residue stretch at 95–168 (EGNYYIFQIV…KMKVELLEGL (74 aa)) folds into the PRC barrel domain.

It belongs to the RimM family. In terms of assembly, binds ribosomal protein uS19.

The protein resides in the cytoplasm. In terms of biological role, an accessory protein needed during the final step in the assembly of 30S ribosomal subunit, possibly for assembly of the head region. Essential for efficient processing of 16S rRNA. May be needed both before and after RbfA during the maturation of 16S rRNA. It has affinity for free ribosomal 30S subunits but not for 70S ribosomes. This chain is Ribosome maturation factor RimM, found in Desulforamulus reducens (strain ATCC BAA-1160 / DSM 100696 / MI-1) (Desulfotomaculum reducens).